Consider the following 416-residue polypeptide: MSLSNKLSIRDLNVKDKRVLIRVDFNVPLDGTTITNNQRIVAALPTIKYALEQKAKTVVLMSHLGRPDGKKVDKYSLAPVAKEVERLLGKKVTFLEDCVGEGVENYVKNACDGEVILLENLRFHAEEEGSSKGPDGKKVKADLEKVKEFRRSLTALGDVYINDAFGTAHRAHSSMVGVELPQKAAGFLVKKELEYFAKALESPERPFLAILGGAKVSDKIQLIDNLIAKVDSLIICGGMAFTFKKTLENVKIGNSLFDADGAKTVGEVMEKAKKHDVEVVLPVDYITADKFAKDAQVGYATDQEGIPDGWMGLDCGEKSVELYKQTIAKAKTILWNGPAGVFEFDNFAKGTKATLDCAVEAAQSGKIVIIGGGDTATVAAKYGVEDKLSHVSTGGGASLELLEGKDLPGVSALSSK.

(2R)-3-phosphoglycerate-binding residues include V23, D24, F25, N26, Q38, R39, S62, H63, G65, R66, L121, R122, H169, and R170. G213 lines the ADP pocket. G213 contacts CDP. Residues A214 and K215 each contribute to the AMP site. ATP is bound at residue A214. A Mg(2+)-binding site is contributed by A214. D218 serves as a coordination point for CDP. Mg(2+) is bound at residue D218. K219 lines the AMP pocket. K219 serves as a coordination point for ATP. An ADP-binding site is contributed by G237. G237 is a CDP binding site. Residues G238 and G312 each coordinate AMP. Residues G238 and G312 each contribute to the ATP site. G337, A339, and F342 together coordinate CDP. F342 provides a ligand contact to ADP. E343 serves as a coordination point for AMP. Positions 343, 374, and 375 each coordinate ATP. Residue D374 participates in Mg(2+) binding.

The protein belongs to the phosphoglycerate kinase family. In terms of assembly, monomer. Mg(2+) serves as cofactor.

The protein resides in the cytoplasm. It localises to the mitochondrion. The catalysed reaction is (2R)-3-phosphoglycerate + ATP = (2R)-3-phospho-glyceroyl phosphate + ADP. It functions in the pathway carbohydrate degradation; glycolysis; pyruvate from D-glyceraldehyde 3-phosphate: step 2/5. Its function is as follows. Catalyzes one of the two ATP producing reactions in the glycolytic pathway via the reversible conversion of 1,3-diphosphoglycerate to 3-phosphoglycerate. Both L- and D- forms of purine and pyrimidine nucleotides can be used as substrates, but the activity is much lower on pyrimidines. Negatively regulates the biosynthesis of acetyl-CoA from pyruvate in the mitochondrion. The chain is Phosphoglycerate kinase (PGK) from Funneliformis mosseae (Endomycorrhizal fungus).